An 852-amino-acid polypeptide reads, in one-letter code: GPI ethanolamine phosphate transferase 2 (852 aa).

N191 and N420 each carry an N-linked (GlcNAc...) asparagine glycan. A run of 3 helical transmembrane segments spans residues 458–478, 486–506, and 516–536; these read LIRL…TFFP, FAPA…MMFA, and FWYW…AGHF. A glycan (N-linked (GlcNAc...) asparagine) is linked at N576. Transmembrane regions (helical) follow at residues 632-652, 676-696, 714-734, 750-770, 787-807, and 824-844; these read LLYH…YSLY, TLTL…FLVF, TITS…SNAI, SVFI…IWWV, AHVT…MAAC, and YLYT…LGEI.

It belongs to the PIGG/PIGN/PIGO family. PIGG subfamily.

It is found in the endoplasmic reticulum membrane. Its pathway is glycolipid biosynthesis; glycosylphosphatidylinositol-anchor biosynthesis. Its function is as follows. Ethanolamine phosphate transferase involved in glycosylphosphatidylinositol-anchor biosynthesis. Transfers ethanolamine phosphate to the GPI second mannose. The protein is GPI ethanolamine phosphate transferase 2 (las21) of Aspergillus oryzae (strain ATCC 42149 / RIB 40) (Yellow koji mold).